Reading from the N-terminus, the 222-residue chain is 7-cyano-7-deazaguanine synthase (222 aa).

8–18 (LSGGLDSTTCL) is a binding site for ATP. Zn(2+)-binding residues include Cys-186, Cys-194, Cys-197, and Cys-200.

Belongs to the QueC family. In terms of assembly, homodimer. The cofactor is Zn(2+).

The catalysed reaction is 7-carboxy-7-deazaguanine + NH4(+) + ATP = 7-cyano-7-deazaguanine + ADP + phosphate + H2O + H(+). The protein operates within purine metabolism; 7-cyano-7-deazaguanine biosynthesis. Its function is as follows. Catalyzes the ATP-dependent conversion of 7-carboxy-7-deazaguanine (CDG) to 7-cyano-7-deazaguanine (preQ(0)). The sequence is that of 7-cyano-7-deazaguanine synthase from Acetivibrio thermocellus (strain ATCC 27405 / DSM 1237 / JCM 9322 / NBRC 103400 / NCIMB 10682 / NRRL B-4536 / VPI 7372) (Clostridium thermocellum).